Consider the following 101-residue polypeptide: Phosphoribosyl-ATP pyrophosphatase (101 aa).

The protein belongs to the PRA-PH family.

Its subcellular location is the cytoplasm. The catalysed reaction is 1-(5-phospho-beta-D-ribosyl)-ATP + H2O = 1-(5-phospho-beta-D-ribosyl)-5'-AMP + diphosphate + H(+). Its pathway is amino-acid biosynthesis; L-histidine biosynthesis; L-histidine from 5-phospho-alpha-D-ribose 1-diphosphate: step 2/9. This Natronomonas pharaonis (strain ATCC 35678 / DSM 2160 / CIP 103997 / JCM 8858 / NBRC 14720 / NCIMB 2260 / Gabara) (Halobacterium pharaonis) protein is Phosphoribosyl-ATP pyrophosphatase.